The chain runs to 195 residues: Capsid protein (195 aa).

The segment at 148-195 (NAPILSTLPETTVVRRRGRSPRRRTPSPRRRRSQSPRRRRSASPASQC) is disordered. Positions 161 to 188 (VRRRGRSPRRRTPSPRRRRSQSPRRRRS) are enriched in basic residues. Phosphoserine; by host is present on residues serine 167, serine 174, and serine 182. The 1; half-length repeat unit spans residues 167–172 (SPRRRT). A 3 X 7 AA repeats of S-P-R-R-R-[PR]-S region spans residues 167–188 (SPRRRTPSPRRRRSQSPRRRRS). The short motif at 170–187 (RRTPSPRRRRSQSPRRRR) is the Bipartite nuclear localization signal element. 2 tandem repeats follow at residues 174–180 (SPRRRRS) and 182–188 (SPRRRRS). An RNA binding region spans residues 189-195 (ASPASQC).

This sequence belongs to the orthohepadnavirus core antigen family. As to quaternary structure, homodimerizes, then multimerizes. Interacts with cytosol exposed regions of viral L glycoprotein present in the reticulum-to-Golgi compartment. Interacts with human FLNB. Phosphorylated form interacts with host importin alpha; this interaction depends on the exposure of the NLS, which itself depends upon genome maturation and/or phosphorylation of the capsid protein. Interacts with host NUP153. Phosphorylated by host SRPK1, SRPK2, and maybe protein kinase C or GAPDH. Phosphorylation is critical for pregenomic RNA packaging. Protein kinase C phosphorylation is stimulated by HBx protein and may play a role in transport of the viral genome to the nucleus at the late step during the viral replication cycle.

Its subcellular location is the virion. It is found in the host cytoplasm. Self assembles to form an icosahedral capsid. Most capsids appear to be large particles with an icosahedral symmetry of T=4 and consist of 240 copies of capsid protein, though a fraction forms smaller T=3 particles consisting of 180 capsid proteins. Entering capsids are transported along microtubules to the nucleus. Phosphorylation of the capsid is thought to induce exposure of nuclear localization signal in the C-terminal portion of the capsid protein that allows binding to the nuclear pore complex via the importin (karyopherin-) alpha and beta. Capsids are imported in intact form through the nuclear pore into the nuclear basket, where it probably binds NUP153. Only capsids that contain the mature viral genome can release the viral DNA and capsid protein into the nucleoplasm. Immature capsids get stuck in the basket. Capsids encapsulate the pre-genomic RNA and the P protein. Pre-genomic RNA is reverse-transcribed into DNA while the capsid is still in the cytoplasm. The capsid can then either be directed to the nucleus, providing more genomes for transcription, or bud through the endoplasmic reticulum to provide new virions. The protein is Capsid protein of Hepatitis B virus genotype G (isolate IG29227/2000) (HBV-G).